A 163-amino-acid chain; its full sequence is Lipoprotein signal peptidase (163 aa).

The next 3 membrane-spanning stretches (helical) occupy residues 11-31 (ILIA…IATT), 63-83 (KMTF…YFFI), and 88-108 (YNLF…GNFI). Active-site residues include Asp118 and Asp136. A helical membrane pass occupies residues 131 to 151 (IFNIADSSLTIGVILIIIALL).

Belongs to the peptidase A8 family.

The protein localises to the cell membrane. It carries out the reaction Release of signal peptides from bacterial membrane prolipoproteins. Hydrolyzes -Xaa-Yaa-Zaa-|-(S,diacylglyceryl)Cys-, in which Xaa is hydrophobic (preferably Leu), and Yaa (Ala or Ser) and Zaa (Gly or Ala) have small, neutral side chains.. It functions in the pathway protein modification; lipoprotein biosynthesis (signal peptide cleavage). This protein specifically catalyzes the removal of signal peptides from prolipoproteins. The chain is Lipoprotein signal peptidase from Staphylococcus aureus (strain Mu3 / ATCC 700698).